The chain runs to 364 residues: Cell division protein FtsZ 1 (364 aa).

GTP is bound by residues 47-48 (GA), 97-99 (AGG), 134-136 (GTG), glutamate 165, arginine 169, and aspartate 212.

This sequence belongs to the FtsZ family. As to quaternary structure, homodimer. Polymerizes to form a dynamic ring structure in a strictly GTP-dependent manner. Interacts directly with several other division proteins.

Its subcellular location is the cytoplasm. Functionally, essential cell division protein that forms a contractile ring structure (Z ring) at the future cell division site. The regulation of the ring assembly controls the timing and the location of cell division. One of the functions of the FtsZ ring is to recruit other cell division proteins to the septum to produce a new cell wall between the dividing cells. Binds GTP and shows GTPase activity. The chain is Cell division protein FtsZ 1 from Methanocaldococcus jannaschii (strain ATCC 43067 / DSM 2661 / JAL-1 / JCM 10045 / NBRC 100440) (Methanococcus jannaschii).